The following is a 397-amino-acid chain: Riboflavin biosynthesis protein RibBA (397 aa).

The interval 1 to 199 (MFHRIEEALE…IEDLIAYRRH (199 aa)) is DHBP synthase. D-ribulose 5-phosphate-binding positions include 26 to 27 (RE), D31, 138 to 142 (RAGHT), and E162. Residue E27 coordinates Mg(2+). H141 lines the Mg(2+) pocket. The GTP cyclohydrolase II stretch occupies residues 200–397 (HETLVTREVE…ASKLGHLLNL (198 aa)). 250-254 (RVHSE) contacts GTP. The Zn(2+) site is built by C255, C266, and C268. Residues Q271, 293–295 (EGR), and T315 contribute to the GTP site. D327 functions as the Proton acceptor; for GTP cyclohydrolase activity in the catalytic mechanism. R329 (nucleophile; for GTP cyclohydrolase activity) is an active-site residue. Residues T350 and K355 each coordinate GTP.

In the N-terminal section; belongs to the DHBP synthase family. It in the C-terminal section; belongs to the GTP cyclohydrolase II family. It depends on Mg(2+) as a cofactor. Mn(2+) serves as cofactor. The cofactor is Zn(2+).

The enzyme catalyses D-ribulose 5-phosphate = (2S)-2-hydroxy-3-oxobutyl phosphate + formate + H(+). The catalysed reaction is GTP + 4 H2O = 2,5-diamino-6-hydroxy-4-(5-phosphoribosylamino)-pyrimidine + formate + 2 phosphate + 3 H(+). The protein operates within cofactor biosynthesis; riboflavin biosynthesis; 2-hydroxy-3-oxobutyl phosphate from D-ribulose 5-phosphate: step 1/1. It functions in the pathway cofactor biosynthesis; riboflavin biosynthesis; 5-amino-6-(D-ribitylamino)uracil from GTP: step 1/4. Catalyzes the conversion of D-ribulose 5-phosphate to formate and 3,4-dihydroxy-2-butanone 4-phosphate. Its function is as follows. Catalyzes the conversion of GTP to 2,5-diamino-6-ribosylamino-4(3H)-pyrimidinone 5'-phosphate (DARP), formate and pyrophosphate. The polypeptide is Riboflavin biosynthesis protein RibBA (Bacillus mycoides (strain KBAB4) (Bacillus weihenstephanensis)).